The primary structure comprises 487 residues: Glutamate--tRNA ligase (487 aa).

The 'HIGH' region motif lies at 12–22 (PSPTGYMHVGN). The short motif at 249–253 (KLSKR) is the 'KMSKS' region element. Lys252 lines the ATP pocket.

Belongs to the class-I aminoacyl-tRNA synthetase family. Glutamate--tRNA ligase type 1 subfamily. In terms of assembly, monomer.

The protein resides in the cytoplasm. The enzyme catalyses tRNA(Glu) + L-glutamate + ATP = L-glutamyl-tRNA(Glu) + AMP + diphosphate. Functionally, catalyzes the attachment of glutamate to tRNA(Glu) in a two-step reaction: glutamate is first activated by ATP to form Glu-AMP and then transferred to the acceptor end of tRNA(Glu). This chain is Glutamate--tRNA ligase, found in Clostridium novyi (strain NT).